The following is a 157-amino-acid chain: Protein Smg homolog (157 aa).

This sequence belongs to the Smg family.

This Shewanella denitrificans (strain OS217 / ATCC BAA-1090 / DSM 15013) protein is Protein Smg homolog.